A 293-amino-acid chain; its full sequence is Protease HtpX homolog (293 aa).

2 helical membrane-spanning segments follow: residues 7 to 26 (ASLL…ALLG) and 30 to 49 (GMVM…WYYS). Residue histidine 131 participates in Zn(2+) binding. Residue glutamate 132 is part of the active site. Histidine 135 provides a ligand contact to Zn(2+). A run of 2 helical transmembrane segments spans residues 148–168 (ATLA…FWFF) and 180–200 (IGAL…QLGI). Glutamate 205 is a Zn(2+) binding site.

Belongs to the peptidase M48B family. The cofactor is Zn(2+).

It localises to the cell inner membrane. This chain is Protease HtpX homolog, found in Acaryochloris marina (strain MBIC 11017).